Consider the following 77-residue polypeptide: Protein UL148C (77 aa).

Transmembrane regions (helical) follow at residues 10 to 30 (VLYL…AVAV) and 35 to 55 (IAWA…VGAA).

The protein localises to the host membrane. The polypeptide is Protein UL148C (UL148C) (Homo sapiens (Human)).